We begin with the raw amino-acid sequence, 317 residues long: Olfactory receptor 8B3 (317 aa).

At Met-1–Tyr-32 the chain is on the extracellular side. Asn-8 carries N-linked (GlcNAc...) asparagine glycosylation. The helical transmembrane segment at Leu-33–Gly-53 threads the bilayer. Over Leu-54 to His-59 the chain is Cytoplasmic. Residues Thr-60–Phe-80 form a helical membrane-spanning segment. The Extracellular portion of the chain corresponds to Ser-81–Tyr-97. The chain crosses the membrane as a helical span at residues Ala-98–Leu-118. Residues Thr-119 to Lys-136 lie on the Cytoplasmic side of the membrane. Residues Val-137–Ala-157 traverse the membrane as a helical segment. Topologically, residues Gly-158–Glu-199 are extracellular. Residues Val-200 to Ser-220 form a helical membrane-spanning segment. At Tyr-221 to Ser-242 the chain is on the cytoplasmic side. Residues Thr-243 to Leu-263 form a helical membrane-spanning segment. At Lys-264–Lys-274 the chain is on the extracellular side. A helical transmembrane segment spans residues Ile-275–Leu-294. Residues Arg-295–Asn-317 lie on the Cytoplasmic side of the membrane.

Belongs to the G-protein coupled receptor 1 family.

The protein resides in the cell membrane. Its function is as follows. Odorant receptor. The polypeptide is Olfactory receptor 8B3 (Mus musculus (Mouse)).